The following is a 629-amino-acid chain: Proteoglycan Cow (629 aa).

The signal sequence occupies residues 1-27; it reads MKHSPLIASACLALVLMSSSLIGSTEA. Disordered stretches follow at residues 118–186 and 198–223; these read KRRV…ESKE and GDKQ…DDDE. Positions 128–143 are enriched in acidic residues; it reads DSQDAEDINNDDEDNS. N-linked (GlcNAc...) asparagine glycosylation occurs at Asn142. Positions 144-159 are enriched in low complexity; the sequence is SDGGSSNSSPTGTNNA. Residues 167 to 186 are compositionally biased toward acidic residues; it reads EETDDEDKSLSLGDDDESKE. One can recognise a Kazal-like domain in the interval 222–273; the sequence is DEELDNCKPCPVAKPTFLCGADNRTYSSLCRLDYHNCIHSTSIRIACKGFCP. Intrachain disulfides connect Cys228/Cys258, Cys231/Cys251, and Cys240/Cys272. N-linked (GlcNAc...) asparagine glycosylation occurs at Asn244. Residues 298 to 356 form a disordered region; that stretch reads SLDQQQQQQQQQQQQQQQQQAYKDSNNNNIMMNSGNIMGGNNNDFNTIMNDKEDNNRHN. Low complexity predominate over residues 301–340; it reads QQQQQQQQQQQQQQQQQAYKDSNNNNIMMNSGNIMGGNNN. EF-hand domains follow at residues 468 to 503 and 508 to 535; these read ACKT…QNER and FIDT…TDRP. Asp481, Asn483, Asp485, Gln487, and Glu492 together coordinate Ca(2+). The Thyroglobulin type-1 domain maps to 533-594; that stretch reads DRPCAAVRRR…NTRTRGKPNC (62 aa). 3 cysteine pairs are disulfide-bonded: Cys536–Cys555, Cys566–Cys573, and Cys575–Cys594. The disordered stretch occupies residues 602-629; the sequence is ASLTSDDEDEGADDEDSAEGSADQMLVF. Positions 606–619 are enriched in acidic residues; the sequence is SDDEDEGADDEDSA. Positions 620-629 are enriched in low complexity; it reads EGSADQMLVF.

As to quaternary structure, interacts (in heparan sulfate-bound form) with wg. In terms of processing, contains heparan sulfate O-linked oligosaccharides. In terms of tissue distribution, in the wing disk, detected throughout the disk where it is localized primarily to the apical surface but is also present at the basal surface (at protein level).

Its subcellular location is the secreted. Functionally, binds to the Wnt signaling protein wg, stabilizes it and promotes its extracellular distribution. This is required for establishment of a wg gradient during development to allow for regulation of target genes at different levels. This Drosophila melanogaster (Fruit fly) protein is Proteoglycan Cow.